Here is a 333-residue protein sequence, read N- to C-terminus: Ribosomal RNA small subunit methyltransferase H (333 aa).

S-adenosyl-L-methionine contacts are provided by residues 34 to 36, Asp59, Phe86, Asp112, and Gln119; that span reads GGH.

It belongs to the methyltransferase superfamily. RsmH family.

It is found in the cytoplasm. The catalysed reaction is cytidine(1402) in 16S rRNA + S-adenosyl-L-methionine = N(4)-methylcytidine(1402) in 16S rRNA + S-adenosyl-L-homocysteine + H(+). Its function is as follows. Specifically methylates the N4 position of cytidine in position 1402 (C1402) of 16S rRNA. This chain is Ribosomal RNA small subunit methyltransferase H, found in Prosthecochloris aestuarii (strain DSM 271 / SK 413).